We begin with the raw amino-acid sequence, 812 residues long: Phenylalanine--tRNA ligase beta subunit (812 aa).

The tRNA-binding domain occupies 39–155 (SKTFAPFTIA…ADAPVGAGYA (117 aa)). The B5 domain occupies 405–480 (PEDRVIDFPL…RIVGVDKVPM (76 aa)). The Mg(2+) site is built by Asp-458, Asp-464, Glu-467, and Glu-468. Residues 718 to 811 (PAFQPVSRDF…VAKRTGGSLR (94 aa)) form the FDX-ACB domain.

This sequence belongs to the phenylalanyl-tRNA synthetase beta subunit family. Type 1 subfamily. In terms of assembly, tetramer of two alpha and two beta subunits. It depends on Mg(2+) as a cofactor.

It is found in the cytoplasm. It carries out the reaction tRNA(Phe) + L-phenylalanine + ATP = L-phenylalanyl-tRNA(Phe) + AMP + diphosphate + H(+). The protein is Phenylalanine--tRNA ligase beta subunit of Nitrobacter winogradskyi (strain ATCC 25391 / DSM 10237 / CIP 104748 / NCIMB 11846 / Nb-255).